We begin with the raw amino-acid sequence, 234 residues long: NAD-dependent protein deacetylase (234 aa).

Residues 1 to 234 enclose the Deacetylase sirtuin-type domain; the sequence is MSDITAAQTT…AVDFFEGVQV (234 aa). 11 residues coordinate NAD(+): Ala-23, Thr-27, Arg-35, Gln-99, Ile-101, Asp-102, His-117, Thr-184, Ser-185, Asn-208, and Val-226. Residues Ile-101 and Asp-102 each contribute to the nicotinamide site. His-117 acts as the Proton acceptor in catalysis.

This sequence belongs to the sirtuin family. Class U subfamily.

Its subcellular location is the cytoplasm. The enzyme catalyses N(6)-acetyl-L-lysyl-[protein] + NAD(+) + H2O = 2''-O-acetyl-ADP-D-ribose + nicotinamide + L-lysyl-[protein]. Functionally, NAD-dependent protein deacetylase which modulates the activities of several enzymes which are inactive in their acetylated form. The chain is NAD-dependent protein deacetylase from Lactiplantibacillus plantarum (strain ATCC BAA-793 / NCIMB 8826 / WCFS1) (Lactobacillus plantarum).